Consider the following 269-residue polypeptide: Gap junction gamma-3 protein (269 aa).

The Extracellular segment spans residues 1-33 (MLLLELPIKCRMCGRFLRQLLAQESQHSTPVGR). A helical membrane pass occupies residues 34 to 54 (FLLPMLMGFRLLILVSSGPGV). The Cytoplasmic portion of the chain corresponds to 55–86 (FGNDENEFICHLGQPGCKTICYDVFRPLSPLR). A helical transmembrane segment spans residues 87–107 (FWAFQVILMAVPSAIYVAFTL). The Extracellular portion of the chain corresponds to 108-145 (YHVIGYWEVPGKENKEQETQISKGDHSKDVSGAKSLKL). The chain crosses the membrane as a helical span at residues 146–166 (LWAYVAHLGVRLALEGAALGV). Topologically, residues 167 to 205 (QYNLYGFKMSSTFICREDPCIGSTTCFQSHPSEKTIFLN) are cytoplasmic. A helical membrane pass occupies residues 206-226 (IMFGISGACFLFIFLELALLG). The Extracellular segment spans residues 227–269 (LGRFWRIYKHKLSFLKKLPTSESSVRSKDTTDELSVVEAKEPF). Position 261 is a phosphoserine (serine 261).

The protein belongs to the connexin family. Gamma-type subfamily. In terms of assembly, a connexon is composed of a hexamer of connexins. CNS specific. Expression is restricted to brain, spinal cord, and sciatic nerve.

It is found in the cell membrane. The protein resides in the cell junction. The protein localises to the gap junction. Its function is as follows. One gap junction consists of a cluster of closely packed pairs of transmembrane channels, the connexons, through which materials of low MW diffuse from one cell to a neighboring cell. The protein is Gap junction gamma-3 protein (Gjc3) of Mus musculus (Mouse).